An 811-amino-acid chain; its full sequence is Exocyst complex component 6B (811 aa).

Residues 50–119 are a coiled coil; the sequence is MEKLETRIRN…LVIAMEELKQ (70 aa). The segment at 260–280 is disordered; that stretch reads STSPKSEQDSGILDVEDEEDD.

This sequence belongs to the SEC15 family. In terms of assembly, the exocyst complex is composed of SEC3, SEC5, SEC6, SEC8, SEC10, SEC15, EXO70 and EXO84.

In terms of biological role, component of the exocyst complex involved in the docking of exocytic vesicles with fusion sites on the plasma membrane. The sequence is that of Exocyst complex component 6B (EXOC6B) from Homo sapiens (Human).